The primary structure comprises 369 residues: N-methyltransferase imqF (369 aa).

This sequence belongs to the methyltransferase superfamily.

The protein operates within secondary metabolite biosynthesis. Functionally, N-methyltransferase; part of the gene cluster that mediates the biosynthesis of imizoquins A to D, tripeptide-derived alkaloids that serve a protective role against oxidative stress that are essential for normal germination. ImqB is a canonical three-module NRPS that assembles the tripeptide backbone of the imizoquins via condensation of Trp, Tyr, and Leu-derived precursors. N-methylation by imqF and phenol oxidation by imqC, followed by cyclization via the FAD-dependent oxidase imqH carry out the three-step transformation of L-tyrosine into tetrahydroisoquinoline. Importantly, this sequence requires the presence of a free amine in the tyrosine moiety, indicating that isoquinoline formation occurs prior to peptide bond formation. The imidazolidin-4-one ring of imizoquins could form following additional oxidation of the methyl-derived bridgehead carbon by imqH. Lastly, O-methylation by imqG and leucine hydroxylation by imqE complete biosynthesis of the imizoquins. This is N-methyltransferase imqF from Aspergillus flavus (strain ATCC 200026 / FGSC A1120 / IAM 13836 / NRRL 3357 / JCM 12722 / SRRC 167).